Reading from the N-terminus, the 283-residue chain is Large ribosomal subunit protein uL2 (283 aa).

The tract at residues 215–283 (RHKGIRPTVR…IRGRKKRINN (69 aa)) is disordered. Residues 274–283 (IRGRKKRINN) are compositionally biased toward basic residues.

Belongs to the universal ribosomal protein uL2 family. As to quaternary structure, part of the 50S ribosomal subunit. Forms a bridge to the 30S subunit in the 70S ribosome.

One of the primary rRNA binding proteins. Required for association of the 30S and 50S subunits to form the 70S ribosome, for tRNA binding and peptide bond formation. It has been suggested to have peptidyltransferase activity; this is somewhat controversial. Makes several contacts with the 16S rRNA in the 70S ribosome. In Mycoplasma mobile (strain ATCC 43663 / 163K / NCTC 11711) (Mesomycoplasma mobile), this protein is Large ribosomal subunit protein uL2.